The primary structure comprises 79 residues: Putative membrane protein insertion efficiency factor (79 aa).

It belongs to the UPF0161 family.

The protein localises to the cell inner membrane. Its function is as follows. Could be involved in insertion of integral membrane proteins into the membrane. This Bacteroides thetaiotaomicron (strain ATCC 29148 / DSM 2079 / JCM 5827 / CCUG 10774 / NCTC 10582 / VPI-5482 / E50) protein is Putative membrane protein insertion efficiency factor.